We begin with the raw amino-acid sequence, 594 residues long: Microtubule-associated protein VP8 (594 aa).

It is found in the virion. The protein localises to the host cytoplasm. Its subcellular location is the host cytoskeleton. Functionally, minor inner capsid component. Displays NTPase and RNA 5'-triphosphatase (RTPase) activities. May function as a cofactor of polymerase VP1. Associates with microtubules and plays a role in the formation, structural organization and morphology of viral inclusions, where the assembly of cores and the replication of viral RNA occur. This chain is Microtubule-associated protein VP8 (S8), found in Saccharum officinarum (Sugarcane).